The following is a 451-amino-acid chain: Probable DNA polymerase delta small subunit (451 aa).

Belongs to the DNA polymerase delta/II small subunit family. In terms of assembly, heterodimer with subunits of 125 kDa and 50 kDa.

It is found in the nucleus. It catalyses the reaction DNA(n) + a 2'-deoxyribonucleoside 5'-triphosphate = DNA(n+1) + diphosphate. The function of the small subunit is not yet clear. The sequence is that of Probable DNA polymerase delta small subunit from Caenorhabditis elegans.